Here is a 39-residue protein sequence, read N- to C-terminus: Photosystem II reaction center protein Psb30 (39 aa).

A helical membrane pass occupies residues 12 to 32 (IFQLTFVGLIVIAGPIVIAVL).

It belongs to the Psb30/Ycf12 family. In terms of assembly, PSII is composed of 1 copy each of membrane proteins PsbA, PsbB, PsbC, PsbD, PsbE, PsbF, PsbH, PsbI, PsbJ, PsbK, PsbL, PsbM, PsbT, PsbX, PsbY, PsbZ, Psb30/Ycf12, peripheral proteins PsbO, CyanoQ (PsbQ), PsbU, PsbV and a large number of cofactors. It forms dimeric complexes.

The protein localises to the cellular thylakoid membrane. Functionally, a core subunit of photosystem II (PSII), probably helps stabilize the reaction center. This is Photosystem II reaction center protein Psb30 from Crocosphaera subtropica (strain ATCC 51142 / BH68) (Cyanothece sp. (strain ATCC 51142)).